A 500-amino-acid chain; its full sequence is Glucose-1-phosphate adenylyltransferase large subunit, chloroplastic/amyloplastic (500 aa).

The N-terminal 33 residues, 1–33 (RASPPSESRAPLRAPQRSATRQHQARQGPRRMC), are a transit peptide targeting the chloroplast. The disordered stretch occupies residues 1 to 47 (RASPPSESRAPLRAPQRSATRQHQARQGPRRMCNGGRGPPYWTAGVT).

This sequence belongs to the bacterial/plant glucose-1-phosphate adenylyltransferase family. As to quaternary structure, heterotetramer.

Its subcellular location is the plastid. The protein resides in the chloroplast. It localises to the amyloplast. It catalyses the reaction alpha-D-glucose 1-phosphate + ATP + H(+) = ADP-alpha-D-glucose + diphosphate. It participates in glycan biosynthesis; starch biosynthesis. Its activity is regulated as follows. Insensitive to 3'phosphoglycerate and orthophosphate. In terms of biological role, this protein plays a role in synthesis of starch. It catalyzes the synthesis of the activated glycosyl donor, ADP-glucose from Glc-1-P and ATP. This Triticum aestivum (Wheat) protein is Glucose-1-phosphate adenylyltransferase large subunit, chloroplastic/amyloplastic (AGA.7).